Here is a 126-residue protein sequence, read N- to C-terminus: uncharacterized protein (126 aa).

The chain crosses the membrane as a helical span at residues 3–23; it reads NMIVLIIFAAFIIYMIASYVY. Residues 39 to 123 form the Rhodanese domain; sequence GYRKAQLIDV…GFKKWGGKIK (85 aa).

The protein localises to the cell membrane. This is an uncharacterized protein from Bacillus subtilis (strain 168).